Here is a 193-residue protein sequence, read N- to C-terminus: Holliday junction branch migration complex subunit RuvA (193 aa).

The interval 1–64 (MIGRIQGTLV…EDAQQLFGFA (64 aa)) is domain I. The domain II stretch occupies residues 65-139 (TEIEREAFRQ…GKLAPDLGIT (75 aa)). Residues 139-143 (TGGKP) are flexible linker. The interval 144–193 (QAIEATSEVLQALLSLGYSEKEALLALKQIPPETSVSDGIRMGLKYLSKP) is domain III.

The protein belongs to the RuvA family. Homotetramer. Forms an RuvA(8)-RuvB(12)-Holliday junction (HJ) complex. HJ DNA is sandwiched between 2 RuvA tetramers; dsDNA enters through RuvA and exits via RuvB. An RuvB hexamer assembles on each DNA strand where it exits the tetramer. Each RuvB hexamer is contacted by two RuvA subunits (via domain III) on 2 adjacent RuvB subunits; this complex drives branch migration. In the full resolvosome a probable DNA-RuvA(4)-RuvB(12)-RuvC(2) complex forms which resolves the HJ.

Its subcellular location is the cytoplasm. Its function is as follows. The RuvA-RuvB-RuvC complex processes Holliday junction (HJ) DNA during genetic recombination and DNA repair, while the RuvA-RuvB complex plays an important role in the rescue of blocked DNA replication forks via replication fork reversal (RFR). RuvA specifically binds to HJ cruciform DNA, conferring on it an open structure. The RuvB hexamer acts as an ATP-dependent pump, pulling dsDNA into and through the RuvAB complex. HJ branch migration allows RuvC to scan DNA until it finds its consensus sequence, where it cleaves and resolves the cruciform DNA. The sequence is that of Holliday junction branch migration complex subunit RuvA from Polynucleobacter asymbioticus (strain DSM 18221 / CIP 109841 / QLW-P1DMWA-1) (Polynucleobacter necessarius subsp. asymbioticus).